Reading from the N-terminus, the 82-residue chain is Probable acyl carrier protein IacP (82 aa).

One can recognise a Carrier domain in the interval 3 to 78 (MDIEARVKKV…DICRVVKKSL (76 aa)). Serine 38 carries the O-(pantetheine 4'-phosphoryl)serine modification.

In terms of processing, 4'-phosphopantetheine is transferred from CoA to a specific serine of apo-IacP.

The protein localises to the cytoplasm. Its function is as follows. Acyl carrier protein. In Salmonella typhimurium (strain SL1344), this protein is Probable acyl carrier protein IacP (iacP).